Reading from the N-terminus, the 159-residue chain is Type IV major alpha-pilin (159 aa).

Residues 1 to 6 (MNAQKG) constitute a propeptide, leader sequence. Phe7 bears the N-methylphenylalanine mark. A helical membrane pass occupies residues 7-27 (FTLIELMIVIAIIGILAAIAL). The disordered stretch occupies residues 64-87 (VLSEESSTSKENIGLTSSETSTKP). The span at 67–87 (EESSTSKENIGLTSSETSTKP) shows a compositional bias: polar residues. An intrachain disulfide couples Cys137 to Cys156.

It belongs to the N-Me-Phe pilin family. Major component of the type IV pilus (T4P) that plays a role in surface and attachment to the host epithelial tissues.

The protein resides in the fimbrium. Its subcellular location is the membrane. In Moraxella bovis, this protein is Type IV major alpha-pilin (tfpI).